The chain runs to 326 residues: Protein LEG1 homolog (326 aa).

The N-terminal stretch at Met-1–Ser-22 is a signal peptide. N-linked (GlcNAc...) asparagine glycosylation is found at Asn-58, Asn-85, Asn-165, Asn-226, and Asn-245.

Belongs to the LEG1 family.

It is found in the secreted. The chain is Protein LEG1 homolog from Dictyostelium discoideum (Social amoeba).